Reading from the N-terminus, the 467-residue chain is A-type ATP synthase subunit B (467 aa).

Positions 95–114 (GKGQPRDHMPLPPPEDFRDV) are disordered.

This sequence belongs to the ATPase alpha/beta chains family. As to quaternary structure, has multiple subunits with at least A(3), B(3), C, D, E, F, H, I and proteolipid K(x).

Its subcellular location is the cell membrane. Its function is as follows. Component of the A-type ATP synthase that produces ATP from ADP in the presence of a proton gradient across the membrane. The B chain is a regulatory subunit. The sequence is that of A-type ATP synthase subunit B from Pyrobaculum aerophilum (strain ATCC 51768 / DSM 7523 / JCM 9630 / CIP 104966 / NBRC 100827 / IM2).